Here is a 233-residue protein sequence, read N- to C-terminus: Purine nucleoside phosphorylase DeoD-type (233 aa).

An a purine D-ribonucleoside-binding site is contributed by His-4. Phosphate-binding positions include Gly-20, Arg-24, Arg-43, and 87–90 (RVGT). Residues Glu-162, 179-181 (EME), and 203-204 (SD) contribute to the a purine D-ribonucleoside site. Asp-204 acts as the Proton donor in catalysis.

Belongs to the PNP/UDP phosphorylase family. In terms of assembly, homohexamer; trimer of homodimers.

The enzyme catalyses a purine D-ribonucleoside + phosphate = a purine nucleobase + alpha-D-ribose 1-phosphate. It catalyses the reaction a purine 2'-deoxy-D-ribonucleoside + phosphate = a purine nucleobase + 2-deoxy-alpha-D-ribose 1-phosphate. Functionally, catalyzes the reversible phosphorolytic breakdown of the N-glycosidic bond in the beta-(deoxy)ribonucleoside molecules, with the formation of the corresponding free purine bases and pentose-1-phosphate. The sequence is that of Purine nucleoside phosphorylase DeoD-type from Alkaliphilus metalliredigens (strain QYMF).